The sequence spans 1396 residues: ATP-binding cassette transporter pdr1 (1396 aa).

A disordered region spans residues 1–22 (MSEQEKGKGDLDDPNSKNTKCP). Residues 73–320 (LHPINIIFRT…FLDLGFIPAK (248 aa)) enclose the ABC transporter 1 domain. The ABC transmembrane type-2 1 domain occupies 412 to 622 (LQVFATAKVT…GYESIMLNEF (211 aa)). 6 helical membrane-spanning segments follow: residues 431 to 451 (YIAT…SLFY), 466 to 486 (VLSN…DIIF), 512 to 532 (LVEF…VYFL), 543 to 563 (FIFY…FRFI), 572 to 592 (IAAL…GAVM), and 680 to 700 (GIIL…ANFI). The ABC transporter 2 domain occupies 758 to 1001 (LCWRDLNFTV…LVNYFKRIHG (244 aa)). Residue 794–801 (GENKSGKS) coordinates ATP. An ABC transmembrane type-2 2 domain is found at 1071–1286 (FQIYKISMRN…FLEGMIGGVL (216 aa)). Transmembrane regions (helical) follow at residues 1095-1115 (VAFN…QGVG), 1166-1186 (FIIA…TLFF), 1208-1228 (FAWL…IGIA), 1245-1265 (FVFI…VGFW), and 1361-1381 (CIMI…YYII).

This sequence belongs to the ABC transporter superfamily. ABCG family. PDR (TC 3.A.1.205) subfamily.

It is found in the endoplasmic reticulum membrane. This chain is ATP-binding cassette transporter pdr1 (pdr1), found in Schizosaccharomyces pombe (strain 972 / ATCC 24843) (Fission yeast).